A 389-amino-acid polypeptide reads, in one-letter code: Chalcone synthase 4 (389 aa).

The active site involves Cys-164.

It belongs to the thiolase-like superfamily. Chalcone/stilbene synthases family.

It carries out the reaction (E)-4-coumaroyl-CoA + 3 malonyl-CoA + 3 H(+) = 2',4,4',6'-tetrahydroxychalcone + 3 CO2 + 4 CoA. The protein operates within secondary metabolite biosynthesis; flavonoid biosynthesis. Its function is as follows. The primary product of this enzyme is 4,2',4',6'-tetrahydroxychalcone (also termed naringenin-chalcone or chalcone) which can under specific conditions spontaneously isomerize into naringenin. The chain is Chalcone synthase 4 (CHS4) from Pisum sativum (Garden pea).